The sequence spans 277 residues: Coiled-coil domain-containing protein 117 (277 aa).

A disordered region spans residues 22–69; sequence SPPAFAGRAFPPGAAGHDLAPRPGVRGPPSSPDGRTARGRVSIHCRKK. The span at 23 to 55 shows a compositional bias: low complexity; that stretch reads PPAFAGRAFPPGAAGHDLAPRPGVRGPPSSPDG. R47 is modified (omega-N-methylarginine). The residue at position 52 (S52) is a Phosphoserine. Positions 58 to 69 are enriched in basic residues; that stretch reads ARGRVSIHCRKK. The stretch at 139–166 forms a coiled coil; the sequence is QCEVARRRLQEIEDRIIDEDEEVESDRN. Disordered regions lie at residues 216 to 242 and 255 to 277; these read LSEK…ATGT and QCTD…EMEL. Over residues 225–242 the composition is skewed to polar residues; sequence NPKNYMGESQTKHTATGT.

As to quaternary structure, interacts with CIAO2B; the interaction is direct. Interacts with MMS19; the interaction is indirect.

It is found in the cytoplasm. It localises to the cytoskeleton. The protein resides in the spindle. The protein localises to the nucleus. Functionally, facilitates DNA repair, cell cycle progression, and cell proliferation through its interaction with CIAO2B. The sequence is that of Coiled-coil domain-containing protein 117 from Rattus norvegicus (Rat).